A 344-amino-acid chain; its full sequence is AA9 family lytic polysaccharide monooxygenase cel61A (344 aa).

The N-terminal stretch at 1–21 (MIQKLSNLLVTALAVATGVVG) is a signal peptide. Residue histidine 22 participates in Cu(2+) binding. 2 cysteine pairs are disulfide-bonded: cysteine 77–cysteine 198 and cysteine 118–cysteine 122. Asparagine 80 carries an N-linked (GlcNAc...) asparagine glycan. Histidine 107 is a binding site for Cu(2+). A glycan (N-linked (GlcNAc...) asparagine) is linked at asparagine 158. Positions 184 and 193 each coordinate O2. Residue tyrosine 195 participates in Cu(2+) binding. Positions 262-310 (ATASATVPGGGSGPTSRTTTTARTTQASSRPSSTPPATTSAPAGGPTQT) are disordered. Residues 275–310 (PTSRTTTTARTTQASSRPSSTPPATTSAPAGGPTQT) show a composition bias toward low complexity. In terms of domain architecture, CBM1 spans 307–343 (PTQTLYGQCGGSGYSGPTRCAPPATCSTLNPYYAQCL).

The protein belongs to the polysaccharide monooxygenase AA9 family. It depends on Cu(2+) as a cofactor.

The protein localises to the secreted. The catalysed reaction is [(1-&gt;4)-beta-D-glucosyl]n+m + reduced acceptor + O2 = 4-dehydro-beta-D-glucosyl-[(1-&gt;4)-beta-D-glucosyl]n-1 + [(1-&gt;4)-beta-D-glucosyl]m + acceptor + H2O.. Its function is as follows. Lytic polysaccharide monooxygenase (LPMO) that depolymerizes crystalline and amorphous polysaccharides via the oxidation of scissile alpha- or beta-(1-4)-glycosidic bonds, yielding C1 or C4 oxidation products. Catalysis by LPMOs requires the reduction of the active-site copper from Cu(II) to Cu(I) by a reducing agent and H(2)O(2) or O(2) as a cosubstrate. Shows activity on beta-glucan and amorphous cellulose. Does not show beta-1-3-glucanase, beta-1,6-glucanase, mannanase, xylanase, beta-1,3-galactosidase, amylase, pectinase, nor chitinase activities. This chain is AA9 family lytic polysaccharide monooxygenase cel61A, found in Hypocrea jecorina (Trichoderma reesei).